Consider the following 669-residue polypeptide: Histone-lysine N-methyltransferase, H3 lysine-9 specific SUVH3 (669 aa).

Disordered stretches follow at residues 56–127 and 270–290; these read YSSF…EKKT and ESLI…ASDQ. 2 stretches are compositionally biased toward polar residues: residues 65–82 and 93–107; these read QQPT…NTPI and RTPT…SSGT. The a.T hook DNA-binding region spans 108–120; sequence KRGVGRPKGTTSV. The region spanning 208–355 is the YDG domain; the sequence is GTVPGIEVGD…CNTFKYKLVR (148 aa). Positions 430–491 constitute a Pre-SET domain; that stretch reads IGCSCSGSCS…SCKNRVIQTG (62 aa). The Zn(2+) site is built by Cys432, Cys434, Cys438, Cys445, Cys447, Cys473, Cys477, Cys479, and Cys483. The SET domain occupies 494–638; it reads SRLEVFKTRN…PMAELTYDYG (145 aa). S-adenosyl-L-methionine-binding positions include 504–506, Asp540, Tyr542, Arg592, and 595–596; these read RGW and NH. Residues Cys598, Cys657, Cys659, and Cys664 each coordinate Zn(2+). In terms of domain architecture, Post-SET spans 653–669; it reads GQRTCLCGSEQCRGSFG.

The protein belongs to the class V-like SAM-binding methyltransferase superfamily. Histone-lysine methyltransferase family. Suvar3-9 subfamily. In terms of tissue distribution, expressed in leaves stems and flowers.

It is found in the nucleus. The protein localises to the chromosome. The protein resides in the centromere. The enzyme catalyses L-lysyl(9)-[histone H3] + S-adenosyl-L-methionine = N(6)-methyl-L-lysyl(9)-[histone H3] + S-adenosyl-L-homocysteine + H(+). Functionally, histone methyltransferase. Methylates 'Lys-9' of histone H3. H3 'Lys-9' methylation represents a specific tag for epigenetic transcriptional repression. The sequence is that of Histone-lysine N-methyltransferase, H3 lysine-9 specific SUVH3 (SUVH3) from Arabidopsis thaliana (Mouse-ear cress).